The following is a 200-amino-acid chain: Cytochrome c biogenesis ATP-binding export protein CcmA (200 aa).

The ABC transporter domain maps to 3–199; it reads LSGRRVICVR…DSRELRIGGV (197 aa). 35-42 is a binding site for ATP; sequence GRNGSGKT.

This sequence belongs to the ABC transporter superfamily. CcmA exporter (TC 3.A.1.107) family. The complex is composed of two ATP-binding proteins (CcmA) and two transmembrane proteins (CcmB).

It is found in the cell inner membrane. It catalyses the reaction heme b(in) + ATP + H2O = heme b(out) + ADP + phosphate + H(+). Part of the ABC transporter complex CcmAB involved in the biogenesis of c-type cytochromes; once thought to export heme, this seems not to be the case, but its exact role is uncertain. Responsible for energy coupling to the transport system. The chain is Cytochrome c biogenesis ATP-binding export protein CcmA from Bradyrhizobium diazoefficiens (strain JCM 10833 / BCRC 13528 / IAM 13628 / NBRC 14792 / USDA 110).